The sequence spans 250 residues: Glycerol-1-phosphate phosphohydrolase 1 (250 aa).

The active-site Nucleophile is the aspartate 18. Positions 18 and 20 each coordinate Mg(2+). Aspartate 20 acts as the Proton donor in catalysis. Lysine 64 participates in a covalent cross-link: Glycyl lysine isopeptide (Lys-Gly) (interchain with G-Cter in SUMO); alternate. Residue lysine 64 forms a Glycyl lysine isopeptide (Lys-Gly) (interchain with G-Cter in ubiquitin); alternate linkage. Serine 90 is modified (phosphoserine). Lysine 144 is covalently cross-linked (Glycyl lysine isopeptide (Lys-Gly) (interchain with G-Cter in ubiquitin)). Residue aspartate 179 coordinates Mg(2+).

This sequence belongs to the HAD-like hydrolase superfamily. DOG/GPP family. As to quaternary structure, monomer. It depends on Mg(2+) as a cofactor.

The protein localises to the cytoplasm. It localises to the nucleus. The enzyme catalyses sn-glycerol 1-phosphate + H2O = glycerol + phosphate. The catalysed reaction is sn-glycerol 3-phosphate + H2O = glycerol + phosphate. Major isoform of glycerol-1-phosphate phosphohydrolase involved in glycerol biosynthesis. Plays a role in osmoadaptation and required for adaptation to anaerobic conditions. This Saccharomyces cerevisiae (strain ATCC 204508 / S288c) (Baker's yeast) protein is Glycerol-1-phosphate phosphohydrolase 1.